The primary structure comprises 349 residues: Draxin (349 aa).

The N-terminal stretch at 1–25 (MAASSTFFSPSLFLCVLVLIDITLA) is a signal peptide. The span at 40–53 (NHLQNQETWPQQPR) shows a compositional bias: polar residues. Disordered stretches follow at residues 40 to 63 (NHLQNQETWPQQPRSGHHHKHGLA), 119 to 166 (PHAE…LYKK), and 246 to 273 (WPSAKKKEKRRSKSSNGGNETSSAEGEP). Residues 54 to 63 (SGHHHKHGLA) are compositionally biased toward basic residues. The segment covering 119–139 (PHAERENQSPGSERGKKQNRE) has biased composition (basic and acidic residues). 2 stretches are compositionally biased toward basic residues: residues 140–155 (QRRHSRRDRLKHHRGK) and 249–258 (AKKKEKRRSK). The N-linked (GlcNAc...) asparagine glycan is linked to N264.

This sequence belongs to the draxin family.

The protein localises to the secreted. In terms of biological role, chemorepulsive axon guidance protein required for the development of spinal cord and forebrain commissures. Acts as a chemorepulsive guidance protein for commissural axons during development. Able to inhibit or repel neurite outgrowth from dorsal spinal cord and cortical explants in vitro. Binds directly to the neurites and growth cones. This Gallus gallus (Chicken) protein is Draxin.